The primary structure comprises 431 residues: C2H2 type master regulator of conidiophore development brlA (431 aa).

Disordered regions lie at residues 29–51, 211–275, and 287–306; these read MTSS…SHGS, TPQQ…SEEY, and IRTH…VRSN. Residues 30-48 show a composition bias toward low complexity; the sequence is TSSFSPLESPTPTPTSLYS. Residues 225–265 show a composition bias toward polar residues; the sequence is PSSNYSDFPASLQTFKPHTPSTPVRSLSLGTPRSDTPQSRM. Basic residues predominate over residues 287 to 302; the sequence is IRTHRQPSRKPSKKQL. C2H2-type zinc fingers lie at residues 321–345 and 351–376; these read FKCK…MKSH and HVCW…TKTH. The disordered stretch occupies residues 390–412; that stretch reads DETSPDYDPEFRGQLTPDGRPIY.

The protein localises to the nucleus. BrlA, abaA and wetA are pivotal regulators of conidiophore development and conidium maturation. They act individually and together to regulate their own expression and that of numerous other sporulation-specific genes. Binds promoters of target genes at brlA response elements (BREs) containing the conserved sequence 5'-(C/A)(A/G)AGGG(G/A)-3'. Regulates the expression levels of seven secondary metabolism gene clusters including a down-regulated cluster putatively involved in the biosynthesis of the mycotoxins roquefortine C and meleagrin. Negatively regulates the expression of cellulase genes. In Penicillium oxalicum (strain 114-2 / CGMCC 5302) (Penicillium decumbens), this protein is C2H2 type master regulator of conidiophore development brlA.